Here is an 89-residue protein sequence, read N- to C-terminus: Translation initiation factor IF-1, chloroplastic (89 aa).

One can recognise an S1-like domain in the interval Met1 to Pro73.

Belongs to the IF-1 family. As to quaternary structure, component of the 30S ribosomal translation pre-initiation complex which assembles on the 30S ribosome in the order IF-2 and IF-3, IF-1 and N-formylmethionyl-tRNA(fMet); mRNA recruitment can occur at any time during PIC assembly.

It is found in the plastid. Its subcellular location is the chloroplast. One of the essential components for the initiation of protein synthesis. Stabilizes the binding of IF-2 and IF-3 on the 30S subunit to which N-formylmethionyl-tRNA(fMet) subsequently binds. Helps modulate mRNA selection, yielding the 30S pre-initiation complex (PIC). Upon addition of the 50S ribosomal subunit IF-1, IF-2 and IF-3 are released leaving the mature 70S translation initiation complex. This is Translation initiation factor IF-1, chloroplastic from Jasminum nudiflorum (Winter jasmine).